The chain runs to 426 residues: Trigger factor (426 aa).

The PPIase FKBP-type domain maps to 166–249; it reads GDIVTFDFKG…IIEVKARELP (84 aa).

This sequence belongs to the FKBP-type PPIase family. Tig subfamily.

Its subcellular location is the cytoplasm. It catalyses the reaction [protein]-peptidylproline (omega=180) = [protein]-peptidylproline (omega=0). Involved in protein export. Acts as a chaperone by maintaining the newly synthesized protein in an open conformation. Functions as a peptidyl-prolyl cis-trans isomerase. In Mesoplasma florum (strain ATCC 33453 / NBRC 100688 / NCTC 11704 / L1) (Acholeplasma florum), this protein is Trigger factor.